We begin with the raw amino-acid sequence, 113 residues long: Ribonuclease P protein component (113 aa).

Belongs to the RnpA family. In terms of assembly, consists of a catalytic RNA component (M1 or rnpB) and a protein subunit.

It catalyses the reaction Endonucleolytic cleavage of RNA, removing 5'-extranucleotides from tRNA precursor.. Functionally, RNaseP catalyzes the removal of the 5'-leader sequence from pre-tRNA to produce the mature 5'-terminus. It can also cleave other RNA substrates such as 4.5S RNA. The protein component plays an auxiliary but essential role in vivo by binding to the 5'-leader sequence and broadening the substrate specificity of the ribozyme. This Geotalea uraniireducens (strain Rf4) (Geobacter uraniireducens) protein is Ribonuclease P protein component.